We begin with the raw amino-acid sequence, 647 residues long: UvrABC system protein C (647 aa).

The GIY-YIG domain occupies 26–106; it reads SEPGCYLMRD…IKEHQPYFNI (81 aa). In terms of domain architecture, UVR spans 216–251; that stretch reads DQLKDLLHKQMLIQSKLQEFEKAAIIRDQIKGIEQL.

Belongs to the UvrC family. In terms of assembly, interacts with UvrB in an incision complex.

Its subcellular location is the cytoplasm. Functionally, the UvrABC repair system catalyzes the recognition and processing of DNA lesions. UvrC both incises the 5' and 3' sides of the lesion. The N-terminal half is responsible for the 3' incision and the C-terminal half is responsible for the 5' incision. The sequence is that of UvrABC system protein C from Prochlorococcus marinus (strain MIT 9211).